An 822-amino-acid chain; its full sequence is MPAPIRLRELIRTIRTARTQAEEREMIQKECAAIRSSFREEDNTYRCRNVAKLLYMHMLGYPAHFGQLECLKLIASQKFTDKRIGYLGAMLLLDERQDVHLLMTNCIKNDLNHSTQFVQGLALCTLGCMGSSEMCRDLAGEVEKLLKTSNSYLRKKAALCAVHVIRKVPELMEMFLPATKNLLNEKNHGVLHTSVVLLTEMCERSPDMLAHFRKLVPQLVRILKNLIMSGYSPEHDVSGISDPFLQVRILRLLRILGRNDDDSSEAMNDILAQVATNTETSKNVGNAILYETVLTIMDIKSESGLRVLAINILGRFLLNNDKNIRYVALTSLLKTVQTDHNAVQRHRSTIVDCLKDLDVSIKRRAMELSFALVNGNNIRGMMKELLYFLDSCEPEFKADCASGIFLAAEKYAPSKRWHIDTIMRVLTTAGSYVRDDAVPNLIQLITNSVEMHAYTVQRLYKAILGDYSQQPLVQVAAWCIGEYGDLLVSGQCEEEEPIQVTEDEVLDILESVLISNMSTSVTRGYALTAIMKLSTRFTCTVNRIKKVVSIYGSSIDVELQQRAVEYNALFKKYDHMRSALLERMPVMEKVTTNGPSEIVQTNGETEPAPLETKPPPSGPQPTSQANDLLDLLGGNDITPVIPTAPTSKPASAGGELLDLLGDITLTGAPAAAPTPASVPQISQPPFLLDGLSSQPLFNDIAPGIPSITAYSKNGLKIEFTFERSNTNPSVTVITIQASNSTELDMTDFVFQAAVPKTFQLQLLSPSSSVVPAFNTGTITQVIKVLNPQKQQLRMRIKLTYNHKGSAMQDLAEVNNFPPQSWQ.

A compositionally biased stretch (polar residues) spans 593 to 604 (NGPSEIVQTNGE). Residues 593-627 (NGPSEIVQTNGETEPAPLETKPPPSGPQPTSQAND) are disordered. Residues 702–817 (PGIPSITAYS…QDLAEVNNFP (116 aa)) enclose the GAE domain.

Belongs to the adaptor complexes large subunit family. Adaptor protein complex 1 (AP-1) is a heterotetramer composed of two large adaptins (gamma-type subunit AP1G1 and beta-type subunit AP1B1), a medium adaptin (mu-type subunit AP1M1 or AP1M2) and a small adaptin (sigma-type subunit AP1S1 or AP1S2 or AP1S3). Interacts (via GAE domain) with RABEP1. Interacts with EPS15. Interacts with SYNRG/gamma-synergin. Interacts (via GAE domain) with AP1AR (via coiled-coil domain). Interacts with CLN3 (via dileucine motif); this interaction facilitates lysosomal targeting. Interacts (via GAE domain) with AFTPH/aftiphilin; the interaction is required to recruit AFTPH/aftiphilin to the perinuclear region of the cell. In terms of tissue distribution, widely expressed.

Its subcellular location is the golgi apparatus. The protein resides in the cytoplasmic vesicle. It localises to the clathrin-coated vesicle membrane. The protein localises to the cytoplasm. It is found in the perinuclear region. Its subcellular location is the clathrin-coated vesicle. The protein resides in the membrane. It localises to the clathrin-coated pit. Functionally, subunit of clathrin-associated adaptor protein complex 1 that plays a role in protein sorting in the late-Golgi/trans-Golgi network (TGN) and/or endosomes. The AP complexes mediate both the recruitment of clathrin to membranes and the recognition of sorting signals within the cytosolic tails of transmembrane cargo molecules. In association with AFTPH/aftiphilin in the aftiphilin/p200/gamma-synergin complex, involved in the trafficking of transferrin from early to recycling endosomes, and the membrane trafficking of furin and the lysosomal enzyme cathepsin D between the trans-Golgi network (TGN) and endosomes. In Mus musculus (Mouse), this protein is AP-1 complex subunit gamma-1 (Ap1g1).